The sequence spans 126 residues: Large ribosomal subunit protein bL12 (126 aa).

The disordered stretch occupies residues 97–126; sequence PQPVKSGVSKEEAEEAKKQLAESGAEVEVK. Positions 104 to 116 are enriched in basic and acidic residues; the sequence is VSKEEAEEAKKQL.

It belongs to the bacterial ribosomal protein bL12 family. In terms of assembly, homodimer. Part of the ribosomal stalk of the 50S ribosomal subunit. Forms a multimeric L10(L12)X complex, where L10 forms an elongated spine to which 2 to 4 L12 dimers bind in a sequential fashion. Binds GTP-bound translation factors.

Forms part of the ribosomal stalk which helps the ribosome interact with GTP-bound translation factors. Is thus essential for accurate translation. This is Large ribosomal subunit protein bL12 from Geotalea uraniireducens (strain Rf4) (Geobacter uraniireducens).